The following is a 105-amino-acid chain: UPF0060 membrane protein Reut_B3679 (105 aa).

The next 4 membrane-spanning stretches (helical) occupy residues 4-24 (IALYLLTAVAEILGCYLPYLW), 28-48 (GASAWVLLPGALSLALFAWLL), 60-80 (AAYGGVYIGVAVLWLWLVDGV), and 82-102 (PSAWDLAGVGVAFGGMAIIVF).

This sequence belongs to the UPF0060 family.

The protein resides in the cell inner membrane. The polypeptide is UPF0060 membrane protein Reut_B3679 (Cupriavidus pinatubonensis (strain JMP 134 / LMG 1197) (Cupriavidus necator (strain JMP 134))).